A 421-amino-acid polypeptide reads, in one-letter code: MVADVLLTHFNQLFCLNDPGHPLTGQEMKKATIVEDGYIAIKDGLIVALGSGEPDAELVGPQTIMRSYKGKIATPGIIDCHTHLVYGGSREHEFAKKLAGVSYLDILAQGGGILSTVRATRSASFDNLYQKSKRLLDYMLLHGVTTVEAKSGYGLDWETEKRQLDVVAALEKDHPIDLVSTFMAAHAIPEEYKGNPKAYLDVIIKDMLPVVKEENLAEFCDIFCEKNVFTADESRYLLSKAKEMGFKLRIHADEIASIGGVDVAAELSAVSAEHLMMITDDGIAKLIGAGVIGNLLPATTFSLMEDTYAPARKMIDAGMAITLSTDSNPGSCPTANMQFVMQLGCFMLRLTPIEVLNAVTINAAYSVNRQERVGSLTVGKEADIAIFDAPNIDYPFYFFATNLIHQVYKKGQLTVDRGRIL.

Positions 81 and 83 each coordinate Fe(3+). Positions 81 and 83 each coordinate Zn(2+). 4-imidazolone-5-propanoate-binding residues include Arg90, Tyr153, and His186. An N-formimidoyl-L-glutamate-binding site is contributed by Tyr153. His251 serves as a coordination point for Fe(3+). His251 is a Zn(2+) binding site. Glu254 is a 4-imidazolone-5-propanoate binding site. Asp326 contributes to the Fe(3+) binding site. Asp326 serves as a coordination point for Zn(2+). The N-formimidoyl-L-glutamate site is built by Asn328 and Gly330. Ser331 contributes to the 4-imidazolone-5-propanoate binding site.

The protein belongs to the metallo-dependent hydrolases superfamily. HutI family. Requires Zn(2+) as cofactor. Fe(3+) serves as cofactor.

It localises to the cytoplasm. It carries out the reaction 4-imidazolone-5-propanoate + H2O = N-formimidoyl-L-glutamate. It functions in the pathway amino-acid degradation; L-histidine degradation into L-glutamate; N-formimidoyl-L-glutamate from L-histidine: step 3/3. In terms of biological role, catalyzes the hydrolytic cleavage of the carbon-nitrogen bond in imidazolone-5-propanoate to yield N-formimidoyl-L-glutamate. It is the third step in the universal histidine degradation pathway. The protein is Imidazolonepropionase of Streptococcus pyogenes serotype M28 (strain MGAS6180).